A 702-amino-acid polypeptide reads, in one-letter code: Ribosomal RNA large subunit methyltransferase K/L (702 aa).

The THUMP domain occupies leucine 43–leucine 154.

Belongs to the methyltransferase superfamily. RlmKL family.

Its subcellular location is the cytoplasm. The catalysed reaction is guanosine(2445) in 23S rRNA + S-adenosyl-L-methionine = N(2)-methylguanosine(2445) in 23S rRNA + S-adenosyl-L-homocysteine + H(+). It catalyses the reaction guanosine(2069) in 23S rRNA + S-adenosyl-L-methionine = N(2)-methylguanosine(2069) in 23S rRNA + S-adenosyl-L-homocysteine + H(+). In terms of biological role, specifically methylates the guanine in position 2445 (m2G2445) and the guanine in position 2069 (m7G2069) of 23S rRNA. This is Ribosomal RNA large subunit methyltransferase K/L from Salmonella agona (strain SL483).